A 361-amino-acid chain; its full sequence is Probable purine permease 13 (361 aa).

10 helical membrane-spanning segments follow: residues 35–55 (WILV…AVLL), 68–88 (WIST…LCFL), 103–123 (LVWI…LYSF), 129–151 (SAST…SYYI), 156–176 (ITCL…LVSL), 192–212 (LIGC…LSLM), 238–258 (VASC…LLSV), 268–288 (VIYV…SVGA), 289–309 (VALI…LSLI), and 323–343 (LTEV…FYIY).

It belongs to the purine permeases (TC 2.A.7.14) family.

The protein localises to the membrane. This chain is Probable purine permease 13 (PUP13), found in Arabidopsis thaliana (Mouse-ear cress).